Reading from the N-terminus, the 167-residue chain is SAR-endolysin (167 aa).

A helical; Signal-anchor for type II membrane protein transmembrane segment spans residues 10–32 (SVMAAISGGAIAIASVLITGPGG). Active-site proton donor/acceptor residues include Glu-37 and Asp-46.

This sequence belongs to the glycosyl hydrolase 24 family.

The protein resides in the host cell inner membrane. The enzyme catalyses Hydrolysis of (1-&gt;4)-beta-linkages between N-acetylmuramic acid and N-acetyl-D-glucosamine residues in a peptidoglycan and between N-acetyl-D-glucosamine residues in chitodextrins.. Signal-arrest-release (SAR) endolysin with lysozyme activity that degrades host peptidoglycans and participates with the pinholin and spanin proteins in the sequential events which lead to programmed host cell lysis releasing the mature viral particles. Once the pinholin has permeabilized the host cell membrane, the SAR-endolysin is released into the periplasm where it breaks down the peptidoglycan layer. The polypeptide is SAR-endolysin (19) (Bacteriophage PS119).